We begin with the raw amino-acid sequence, 133 residues long: Salivary cystatin-L2 (133 aa).

An N-terminal signal peptide occupies residues 1 to 18 (MTSSLALVLLLGGAAVCA). In terms of domain architecture, Cystatin spans 34 to 118 (DDPKYLELAH…RTCTAVIYEN (85 aa)).

Belongs to the cystatin family. As to expression, salivary gland, midgut and other tissues.

The protein resides in the secreted. Functionally, inhibitor of cysteine proteinases. Inhibits host cathepsin L (CTSL) and S (CTSS). Modulates production of various cytokines and chemokines in lipopolysaccharide (LPS)-stimulated mouse dendritic cell. Suppresses maturation of mouse bone-marrow-derived dendritic cells (BMDCs). (Microbial infection) Modulates Borrelia miyamotoi-stimulated immune responses in mice by suppressing activities of host dendritic and T-cells. The protein is Salivary cystatin-L2 of Ixodes persulcatus (Taiga tick).